We begin with the raw amino-acid sequence, 104 residues long: L-rhamnose mutarotase (104 aa).

Y18 is a binding site for substrate. Residue H22 is the Proton donor of the active site. Residues Y41 and 76–77 (WW) contribute to the substrate site. Residues 85-104 (PSNPDNSPISDALDPVFYLD) form a disordered region.

It belongs to the rhamnose mutarotase family. In terms of assembly, homodimer.

It is found in the cytoplasm. It catalyses the reaction alpha-L-rhamnose = beta-L-rhamnose. Its pathway is carbohydrate metabolism; L-rhamnose metabolism. Functionally, involved in the anomeric conversion of L-rhamnose. The sequence is that of L-rhamnose mutarotase from Pectobacterium atrosepticum (strain SCRI 1043 / ATCC BAA-672) (Erwinia carotovora subsp. atroseptica).